The sequence spans 1019 residues: Probable LRR receptor-like serine/threonine-protein kinase At1g29720 (1019 aa).

Positions 1–19 are cleaved as a signal peptide; sequence MSIILWSFFLFFTIILSSL. The Extracellular segment spans residues 20-615; sequence TNITTLASFS…EKTKHHIKYP (596 aa). Residues asparagine 21, asparagine 79, and asparagine 90 are each glycosylated (N-linked (GlcNAc...) asparagine). LRR repeat units follow at residues 93–117, 118–141, 143–165, 166–189, 190–212, 214–236, 237–261, 263–283, 284–307, 308–330, 332–351, 352–374, and 375–398; these read ICRI…LTKL, PYLK…WAKM, YLTS…LQNF, KNLT…LGNL, TSLT…TLAR, VNLE…YIGN, WTRL…VVRL, NLLE…NLSS, KGLK…IWNL, TDLK…VQNP, KNIY…GGLL, NSQS…QKGS, and TINT…AVPA. 3 N-linked (GlcNAc...) asparagine glycosylation sites follow: asparagine 153, asparagine 167, and asparagine 188. N-linked (GlcNAc...) asparagine glycosylation is found at asparagine 225 and asparagine 236. N-linked (GlcNAc...) asparagine glycosylation is found at asparagine 280 and asparagine 306. N-linked (GlcNAc...) asparagine glycans are attached at residues asparagine 363, asparagine 387, asparagine 469, and asparagine 558. A helical transmembrane segment spans residues 616-636; it reads LILGASGALVTIVLLAVGIYA. At 637 to 1019 the chain is on the cytoplasmic side; that stretch reads RGIYRRDNNR…STVENSSSSL (383 aa). A Protein kinase domain is found at 673 to 946; the sequence is FDQANKLGEG…EAVKMLEGEI (274 aa). ATP is bound by residues 679-687 and lysine 701; that span reads LGEGGFGSV. The residue at position 746 (tyrosine 746) is a Phosphotyrosine. The active-site Proton acceptor is the aspartate 797. At serine 830 the chain carries Phosphoserine. 2 positions are modified to phosphothreonine: threonine 831 and threonine 836. Tyrosine 844 is subject to Phosphotyrosine.

Belongs to the protein kinase superfamily. Ser/Thr protein kinase family.

Its subcellular location is the cell membrane. The enzyme catalyses L-seryl-[protein] + ATP = O-phospho-L-seryl-[protein] + ADP + H(+). It catalyses the reaction L-threonyl-[protein] + ATP = O-phospho-L-threonyl-[protein] + ADP + H(+). The chain is Probable LRR receptor-like serine/threonine-protein kinase At1g29720 (RFK1) from Arabidopsis thaliana (Mouse-ear cress).